Reading from the N-terminus, the 212-residue chain is ATP phosphoribosyltransferase (212 aa).

This sequence belongs to the ATP phosphoribosyltransferase family. Short subfamily. As to quaternary structure, heteromultimer composed of HisG and HisZ subunits.

It is found in the cytoplasm. It catalyses the reaction 1-(5-phospho-beta-D-ribosyl)-ATP + diphosphate = 5-phospho-alpha-D-ribose 1-diphosphate + ATP. It functions in the pathway amino-acid biosynthesis; L-histidine biosynthesis; L-histidine from 5-phospho-alpha-D-ribose 1-diphosphate: step 1/9. Its function is as follows. Catalyzes the condensation of ATP and 5-phosphoribose 1-diphosphate to form N'-(5'-phosphoribosyl)-ATP (PR-ATP). Has a crucial role in the pathway because the rate of histidine biosynthesis seems to be controlled primarily by regulation of HisG enzymatic activity. The chain is ATP phosphoribosyltransferase from Geobacter metallireducens (strain ATCC 53774 / DSM 7210 / GS-15).